Here is a 597-residue protein sequence, read N- to C-terminus: Fructan 1-exohydrolase (597 aa).

Residues 1–15 form the signal peptide; sequence MAQAWAFLLPVLVFG. Residue Asp-76 is part of the active site. N-linked (GlcNAc...) asparagine glycosylation is found at Asn-169, Asn-237, and Asn-249. Residues Cys-447 and Cys-493 are joined by a disulfide bond. N-linked (GlcNAc...) asparagine glycosylation is present at Asn-568.

Belongs to the glycosyl hydrolase 32 family.

It catalyses the reaction Hydrolysis of terminal, non-reducing (2-&gt;1)-linked beta-D-fructofuranose residues in fructans.. Its activity is regulated as follows. Inhibited by sucrose. Functionally, hydrolyzes inulin-type beta-(2,1)-fructans. May play a role as a beta-(2,1)-trimmer during graminan biosynthesis. In Triticum urartu (Red wild einkorn), this protein is Fructan 1-exohydrolase.